The following is a 444-amino-acid chain: Phosphoglucosamine mutase (444 aa).

The Phosphoserine intermediate role is filled by serine 102. The Mg(2+) site is built by serine 102, aspartate 241, aspartate 243, and aspartate 245. Serine 102 is subject to Phosphoserine.

This sequence belongs to the phosphohexose mutase family. It depends on Mg(2+) as a cofactor. In terms of processing, activated by phosphorylation.

It carries out the reaction alpha-D-glucosamine 1-phosphate = D-glucosamine 6-phosphate. Its function is as follows. Catalyzes the conversion of glucosamine-6-phosphate to glucosamine-1-phosphate. This chain is Phosphoglucosamine mutase, found in Histophilus somni (strain 129Pt) (Haemophilus somnus).